The sequence spans 295 residues: Carbapenem-hydrolyzing beta-lactamase transcriptional activator (295 aa).

In terms of domain architecture, HTH lysR-type spans 5–62 (LPLNALRAFEASARYLNFTKAGLELHVSQAAVSQQVRTLEQMLGVALFTRVPRGLQLT). The H-T-H motif DNA-binding region spans 22–41 (FTKAGLELHVSQAAVSQQVR).

It belongs to the LysR transcriptional regulatory family.

In terms of biological role, this protein is a positive regulator of gene expression of carbapenem-hydrolyzing beta-lactamase (NmcA). In Enterobacter cloacae, this protein is Carbapenem-hydrolyzing beta-lactamase transcriptional activator (nmcR).